The sequence spans 204 residues: Large ribosomal subunit protein eL15z (204 aa).

Belongs to the eukaryotic ribosomal protein eL15 family.

This chain is Large ribosomal subunit protein eL15z (SB61), found in Picea mariana (Black spruce).